Reading from the N-terminus, the 315-residue chain is Transaldolase (315 aa).

The Schiff-base intermediate with substrate role is filled by Lys125.

Belongs to the transaldolase family. Type 1 subfamily. Homodimer.

The protein resides in the cytoplasm. The enzyme catalyses D-sedoheptulose 7-phosphate + D-glyceraldehyde 3-phosphate = D-erythrose 4-phosphate + beta-D-fructose 6-phosphate. The protein operates within carbohydrate degradation; pentose phosphate pathway; D-glyceraldehyde 3-phosphate and beta-D-fructose 6-phosphate from D-ribose 5-phosphate and D-xylulose 5-phosphate (non-oxidative stage): step 2/3. Transaldolase is important for the balance of metabolites in the pentose-phosphate pathway. The protein is Transaldolase of Leptothrix cholodnii (strain ATCC 51168 / LMG 8142 / SP-6) (Leptothrix discophora (strain SP-6)).